A 290-amino-acid chain; its full sequence is Nucleotide-binding protein BPP4038 (290 aa).

An ATP-binding site is contributed by 9 to 16 (GISGSGKS). Residue 58 to 61 (DVRS) coordinates GTP.

Belongs to the RapZ-like family.

Displays ATPase and GTPase activities. In Bordetella parapertussis (strain 12822 / ATCC BAA-587 / NCTC 13253), this protein is Nucleotide-binding protein BPP4038.